The primary structure comprises 87 residues: FXYD domain-containing ion transport regulator 3 (87 aa).

The N-terminal stretch at 1–20 (MQKVTLGLLVFLAGFPVLDA) is a signal peptide. Residues 21–38 (NDLEDKNSPFYYDWHSLQ) lie on the Extracellular side of the membrane. The helical transmembrane segment at 39 to 59 (VGGLICAGVLCAMGIIIVMSA) threads the bilayer. Residues 60-87 (KCKCKFGQKSGHHPGETPPLITPGSAQS) lie on the Cytoplasmic side of the membrane. A disordered region spans residues 66–87 (GQKSGHHPGETPPLITPGSAQS).

Belongs to the FXYD family. Regulatory subunit of the sodium/potassium-transporting ATPase which is composed of a catalytic alpha subunit, a non-catalytic beta subunit and an additional regulatory subunit. Interacts with catalytic alpha subunit ATP1A1. Also interacts with non-catalytic beta subunit ATP1B1. Interacts with the ATP1A1-ATP1B1, ATP1A2-ATP1B1 and ATP1A3-ATP1B1 NKA isozymes. Glutathionylated. As to expression, isoform 1: Expressed mainly in differentiated cells (at protein level). Isoform 2: Expressed mainly in undifferentiated cells (at protein level).

It localises to the cell membrane. Functionally, associates with and regulates the activity of the sodium/potassium-transporting ATPase (NKA) which transports Na(+) out of the cell and K(+) into the cell. Reduces glutathionylation of the NKA beta-1 subunit ATP1B1, thus reversing glutathionylation-mediated inhibition of ATP1B1. Induces a hyperpolarization-activated chloride current when expressed in Xenopus oocytes. In terms of biological role, decreases the apparent K+ and Na+ affinity of the sodium/potassium-transporting ATPase over a large range of membrane potentials. Decreases the apparent K+ affinity of the sodium/potassium-transporting ATPase only at slightly negative and positive membrane potentials and increases the apparent Na+ affinity over a large range of membrane potentials. The polypeptide is FXYD domain-containing ion transport regulator 3 (FXYD3) (Homo sapiens (Human)).